A 357-amino-acid polypeptide reads, in one-letter code: 3-isopropylmalate dehydrogenase (357 aa).

R99, R109, R133, and D223 together coordinate substrate. D223, D247, and D251 together coordinate Mg(2+). Position 283–295 (G283–D295) interacts with NAD(+).

This sequence belongs to the isocitrate and isopropylmalate dehydrogenases family. LeuB type 2 subfamily. In terms of assembly, homodimer. It depends on Mg(2+) as a cofactor. The cofactor is Mn(2+).

The protein localises to the cytoplasm. It carries out the reaction (2R,3S)-3-isopropylmalate + NAD(+) = 4-methyl-2-oxopentanoate + CO2 + NADH. It participates in amino-acid biosynthesis; L-leucine biosynthesis; L-leucine from 3-methyl-2-oxobutanoate: step 3/4. Functionally, catalyzes the oxidation of 3-carboxy-2-hydroxy-4-methylpentanoate (3-isopropylmalate) to 3-carboxy-4-methyl-2-oxopentanoate. The product decarboxylates to 4-methyl-2 oxopentanoate. The chain is 3-isopropylmalate dehydrogenase from Leifsonia xyli subsp. xyli (strain CTCB07).